The following is a 305-amino-acid chain: Carbonic anhydrase 4 (305 aa).

The N-terminal stretch at 1–17 (MQLLLALLALAYVAPST) is a signal peptide. The Alpha-carbonic anhydrase domain occupies 20-278 (SGWCYEIQTK…LGKRQVFKSH (259 aa)). Intrachain disulfides connect C23-C35 and C45-C222. The active-site Proton donor/acceptor is the H87. 2 residues coordinate Zn(2+): H114 and H116. N123 carries N-linked (GlcNAc...) asparagine glycosylation. H139 is a Zn(2+) binding site. N-linked (GlcNAc...) asparagine glycosylation occurs at N214. 218–219 (TT) provides a ligand contact to substrate. The GPI-anchor amidated serine moiety is linked to residue S277. The propeptide at 278 to 305 (HAPGQLLSLPLPTLLVPTLTCLVANFLQ) is removed in mature form.

This sequence belongs to the alpha-carbonic anhydrase family. In terms of assembly, interacts with SLC4A4. The cofactor is Zn(2+).

The protein resides in the cell membrane. The catalysed reaction is hydrogencarbonate + H(+) = CO2 + H2O. Inhibited by acetazolamide. Catalyzes the reversible hydration of carbon dioxide into bicarbonate and protons and thus is essential to maintaining intracellular and extracellular pH. May stimulate the sodium/bicarbonate transporter activity of SLC4A4 that acts in pH homeostasis. It is essential for acid overload removal from the retina and retina epithelium, and acid release in the choriocapillaris in the choroid. The chain is Carbonic anhydrase 4 (Ca4) from Mus musculus (Mouse).